A 497-amino-acid chain; its full sequence is Probable cytosol aminopeptidase (497 aa).

Residues K263 and D268 each contribute to the Mn(2+) site. The active site involves K275. 3 residues coordinate Mn(2+): D286, D345, and E347. The active site involves R349.

The protein belongs to the peptidase M17 family. Mn(2+) is required as a cofactor.

Its subcellular location is the cytoplasm. It carries out the reaction Release of an N-terminal amino acid, Xaa-|-Yaa-, in which Xaa is preferably Leu, but may be other amino acids including Pro although not Arg or Lys, and Yaa may be Pro. Amino acid amides and methyl esters are also readily hydrolyzed, but rates on arylamides are exceedingly low.. The enzyme catalyses Release of an N-terminal amino acid, preferentially leucine, but not glutamic or aspartic acids.. Presumably involved in the processing and regular turnover of intracellular proteins. Catalyzes the removal of unsubstituted N-terminal amino acids from various peptides. This Sinorhizobium fredii (strain NBRC 101917 / NGR234) protein is Probable cytosol aminopeptidase.